The primary structure comprises 62 residues: UPF0434 protein SPO3421 (62 aa).

The protein belongs to the UPF0434 family.

This chain is UPF0434 protein SPO3421, found in Ruegeria pomeroyi (strain ATCC 700808 / DSM 15171 / DSS-3) (Silicibacter pomeroyi).